The following is a 136-amino-acid chain: Glutamate-rich protein 4 (136 aa).

The segment at 92–136 (EEEEEEEQEEKSCVEENKGPEEKQDEERSRSSYPAQRLPDFGMTI) is disordered. The segment covering 101–121 (EKSCVEENKGPEEKQDEERSR) has biased composition (basic and acidic residues).

The sequence is that of Glutamate-rich protein 4 (Erich4) from Mus musculus (Mouse).